Here is a 240-residue protein sequence, read N- to C-terminus: Phosducin-like protein 2 (240 aa).

The Phosducin domain maps to 54–214 (QRDKKIDDMS…MLGQAGAVPT (161 aa)). 2 positions are modified to phosphoserine: Ser63 and Ser73. Residues 99-240 (FGSVREISGQ…DLEDKSSDFY (142 aa)) form a thioredoxin fold region.

Belongs to the phosducin family.

Its subcellular location is the cytoplasm. In terms of biological role, modulates the activation of caspases during apoptosis. This Drosophila melanogaster (Fruit fly) protein is Phosducin-like protein 2.